A 160-amino-acid chain; its full sequence is Transcriptional repressor NrdR (160 aa).

The segment covering 1-11 (MRCPNCNSLDT) has biased composition (polar residues). The tract at residues 1-20 (MRCPNCNSLDTQVKDSRPTE) is disordered. Residues 3-34 (CPNCNSLDTQVKDSRPTEDSSVIRRRRVCIAC) fold into a zinc finger. Positions 49–139 (LIVIKRNGRR…VYRNFREAKD (91 aa)) constitute an ATP-cone domain.

This sequence belongs to the NrdR family. Zn(2+) serves as cofactor.

Functionally, negatively regulates transcription of bacterial ribonucleotide reductase nrd genes and operons by binding to NrdR-boxes. The chain is Transcriptional repressor NrdR from Rhodopseudomonas palustris (strain ATCC BAA-98 / CGA009).